An 800-amino-acid polypeptide reads, in one-letter code: U4/U6.U5 tri-snRNP-associated protein 1 (800 aa).

Positions 1–120 (MGSSKKHRGE…SSGDASSLSI (120 aa)) are disordered. Positions 32-42 (HREHKKHKHRS) are enriched in basic residues. Over residues 58–101 (ERGGERGSGRRGAEAEARSSTHGRERSQAEPSERRVKREKRDDG) the composition is skewed to basic and acidic residues. The segment covering 104-119 (AAASSKTSSGDASSLS) has biased composition (low complexity). Residues K125 and K133 each participate in a glycyl lysine isopeptide (Lys-Gly) (interchain with G-Cter in SUMO2) cross-link. K141 is covalently cross-linked (Glycyl lysine isopeptide (Lys-Gly) (interchain with G-Cter in SUMO1); alternate). K141 is covalently cross-linked (Glycyl lysine isopeptide (Lys-Gly) (interchain with G-Cter in SUMO2); alternate). Glycyl lysine isopeptide (Lys-Gly) (interchain with G-Cter in SUMO2) cross-links involve residues K147 and K188. Residues 157–231 (NPMALRQREE…KLLEEMDQEF (75 aa)) are a coiled coil. The residue at position 189 (T189) is a Phosphothreonine. K277 participates in a covalent cross-link: Glycyl lysine isopeptide (Lys-Gly) (interchain with G-Cter in SUMO2). Positions 311 to 330 (PDYLPYAEDESVDDLAQQKP) are disordered. Residue S321 is modified to Phosphoserine. Glycyl lysine isopeptide (Lys-Gly) (interchain with G-Cter in SUMO2) cross-links involve residues K329 and K336. Phosphoserine is present on S348. The residue at position 392 (T392) is a Phosphothreonine. Glycyl lysine isopeptide (Lys-Gly) (interchain with G-Cter in SUMO2) cross-links involve residues K400 and K414. The tract at residues 419–497 (RADDLLPLGD…QVLEEDEAEL (79 aa)) is disordered. Position 430 is a phosphothreonine (T430). Phosphoserine occurs at positions 448, 474, 486, and 521. The stretch at 490–533 (LEEDEAELELQKQLEKGRRLRQLQQLQQLRDSGEKVVEIVKKLE) forms a coiled coil. Residue K548 forms a Glycyl lysine isopeptide (Lys-Gly) (interchain with G-Cter in SUMO2) linkage. The segment at 571–604 (LAGNREEQEELMDFERDEERSANGGSESDGEENI) is disordered. Residues S591, S596, S598, and S621 each carry the phosphoserine modification. Glycyl lysine isopeptide (Lys-Gly) (interchain with G-Cter in SUMO2) cross-links involve residues K648, K657, and K684. T695 is modified (phosphothreonine). Glycyl lysine isopeptide (Lys-Gly) (interchain with G-Cter in SUMO2) cross-links involve residues K699, K709, K723, K749, and K758. Position 761 is a phosphoserine (S761). T764 bears the Phosphothreonine mark. Residues K775 and K780 each participate in a glycyl lysine isopeptide (Lys-Gly) (interchain with G-Cter in SUMO2) cross-link. Phosphoserine is present on S789. K791 participates in a covalent cross-link: Glycyl lysine isopeptide (Lys-Gly) (interchain with G-Cter in SUMO2).

It belongs to the SNU66/SART1 family. Identified in the spliceosome C complex. Component of the U4/U6-U5 tri-snRNP complex composed of the U4, U6 and U5 snRNAs and at least PRPF3, PRPF4, PRPF6, PRPF8, PRPF31, SNRNP200, TXNL4A, SNRNP40, DDX23, CD2BP2, PPIH, SNU13, EFTUD2, SART1 and USP39. Interacts with UBL5. Interacts with IVNS1ABP (via Kelch repeats). In terms of processing, sumoylated with SUMO2. In terms of tissue distribution, ubiquitously expressed.

Its subcellular location is the nucleus. Functionally, plays a role in mRNA splicing as a component of the U4/U6-U5 tri-snRNP, one of the building blocks of the spliceosome. May also bind to DNA. In Homo sapiens (Human), this protein is U4/U6.U5 tri-snRNP-associated protein 1 (SART1).